The sequence spans 479 residues: G-rich sequence factor 1 (479 aa).

The N-terminal 116 residues, 1–116 (MAGTRWVLGA…AAAAGPARGY (116 aa)), are a transit peptide targeting the mitochondrion. RRM domains follow at residues 149–245 (YLIR…PSPV) and 249–325 (GVVR…PSRR). Ser243 is subject to Phosphoserine. A Phosphoserine modification is found at Ser334. Residues 400–479 (HFVHMRGLPF…LFLNSCPKGK (80 aa)) form the RRM 3 domain.

In terms of assembly, monomer. Found in a complex with DDX28, DHX30, FASTKD2 and FASTKD5. Interacts with the mitochondrial RNase P complex subunit TRMT10C/MRPP1. Interacts with the 2 components of the mitochondrial degradosome complex, PNPT1 and SUPV3L1, in an RNA-dependent manner.

The protein localises to the mitochondrion matrix. Functionally, regulator of post-transcriptional mitochondrial gene expression, required for assembly of the mitochondrial ribosome and for recruitment of mRNA and lncRNA. Binds RNAs containing the 14 base G-rich element. Preferentially binds RNAs transcribed from three contiguous genes on the light strand of mtDNA, the ND6 mRNA, and the long non-coding RNAs for MT-CYB and MT-ND5, each of which contains multiple consensus binding sequences. Involved in the degradosome-mediated decay of non-coding mitochondrial transcripts (MT-ncRNA) and tRNA-like molecules. Acts by unwinding G-quadruplex RNA structures in MT-ncRNA, thus facilitating their degradation by the degradosome. G-quadruplexes (G4) are non-canonical 4 stranded structures formed by transcripts from the light strand of mtDNA. The chain is G-rich sequence factor 1 (Grsf1) from Mus musculus (Mouse).